The following is a 1058-amino-acid chain: Carbamoyl phosphate synthase large chain (1058 aa).

The carboxyphosphate synthetic domain stretch occupies residues 1 to 401 (MPKRTDIQKI…SLLKACRSLE (401 aa)). The ATP site is built by R129, R169, G175, G176, R208, I210, E215, G241, I242, H243, Q284, and E298. In terms of domain architecture, ATP-grasp 1 spans 133-327 (KQLMEELEQP…IAKLAAKIAV (195 aa)). Mg(2+) is bound by residues Q284, E298, and N300. Q284, E298, and N300 together coordinate Mn(2+). The segment at 402–546 (IGVHHNEIPE…YSTYGWENES (145 aa)) is oligomerization domain. The interval 547–929 (IRSDKESVLV…ALYKAFEASY (383 aa)) is carbamoyl phosphate synthetic domain. The ATP-grasp 2 domain maps to 671–861 (EQALKELDIP…MAQVATKLIL (191 aa)). Positions 707, 746, 748, 752, 777, 778, 779, 780, 820, and 832 each coordinate ATP. 3 residues coordinate Mg(2+): Q820, E832, and N834. 3 residues coordinate Mn(2+): Q820, E832, and N834. Positions 930-1058 (LHLPTFGNVV…ESRSFVTEAI (129 aa)) constitute an MGS-like domain. The interval 930 to 1058 (LHLPTFGNVV…ESRSFVTEAI (129 aa)) is allosteric domain.

The protein belongs to the CarB family. In terms of assembly, composed of two chains; the small (or glutamine) chain promotes the hydrolysis of glutamine to ammonia, which is used by the large (or ammonia) chain to synthesize carbamoyl phosphate. Tetramer of heterodimers (alpha,beta)4. Requires Mg(2+) as cofactor. Mn(2+) serves as cofactor.

It carries out the reaction hydrogencarbonate + L-glutamine + 2 ATP + H2O = carbamoyl phosphate + L-glutamate + 2 ADP + phosphate + 2 H(+). The enzyme catalyses hydrogencarbonate + NH4(+) + 2 ATP = carbamoyl phosphate + 2 ADP + phosphate + 2 H(+). It participates in amino-acid biosynthesis; L-arginine biosynthesis; carbamoyl phosphate from bicarbonate: step 1/1. The protein operates within pyrimidine metabolism; UMP biosynthesis via de novo pathway; (S)-dihydroorotate from bicarbonate: step 1/3. Its function is as follows. Large subunit of the glutamine-dependent carbamoyl phosphate synthetase (CPSase). CPSase catalyzes the formation of carbamoyl phosphate from the ammonia moiety of glutamine, carbonate, and phosphate donated by ATP, constituting the first step of 2 biosynthetic pathways, one leading to arginine and/or urea and the other to pyrimidine nucleotides. The large subunit (synthetase) binds the substrates ammonia (free or transferred from glutamine from the small subunit), hydrogencarbonate and ATP and carries out an ATP-coupled ligase reaction, activating hydrogencarbonate by forming carboxy phosphate which reacts with ammonia to form carbamoyl phosphate. In Streptococcus pneumoniae (strain Hungary19A-6), this protein is Carbamoyl phosphate synthase large chain.